The sequence spans 999 residues: Protein Smaug (999 aa).

A compositionally biased stretch (polar residues) spans 1 to 36 (MKYATGTDNAMTSGISGQTNNSNSASNEMQPTTSTP). Disordered regions lie at residues 1 to 69 (MKYA…QSQP) and 329 to 349 (LCPA…IAPP). Composition is skewed to low complexity over residues 44–69 (TSTA…QSQP) and 329–338 (LCPASGSRSS). S564 and S575 each carry phosphoserine. The interaction with cup stretch occupies residues 583–763 (EFKPNYIKFH…KDLKFKLSKM (181 aa)). Residues 600 to 654 (GIGLWLKSLRLHKYIELFKNMTYEEMLLITEDFLQSVGVTKGASHKLALCIDKLK) enclose the SAM domain. Disordered stretches follow at residues 773–892 (HVKP…MQQM) and 955–977 (QQSQ…EQQP). Polar residues-rich tracts occupy residues 801-822 (KNGS…NFSL) and 854-864 (HQPQYKSSSYP). Position 972 is a phosphoserine (S972).

This sequence belongs to the SMAUG family. In terms of assembly, interacts with oskar (osk). Binds to the 3'-UTR of nanos (nos). Interacts with cup, which in turn recruits eIF4-E, leading to an indirect interaction between smg and eIF4-E that prevents mRNA translation. Forms a complex with aub, twin, AGO3, nanos mRNA and piRNAs that targets the nanos 3'-untranslated region, in early embryos. In terms of tissue distribution, at syncytial blastoderm, it is located throughout the bulk cytoplasm and pole plasm. By the time of cellularization, it concentrates at the posterior pole.

The protein localises to the cytoplasm. Translation regulator that binds to the 3'-UTR of specific mRNAs such as nanos (nos) and prevents their translation. Prevents translation of unlocalized nanos in the bulk cytoplasm via the recruitment of cup. This is Protein Smaug (smg) from Drosophila melanogaster (Fruit fly).